Consider the following 633-residue polypeptide: E3 ubiquitin-protein ligase ZSWIM2 (633 aa).

The segment at 54–87 adopts an SWIM-type zinc-finger fold; it reads FRVFLGNPHVCNCSTFPKGGELCKHICWVLLKKF. The RING-type 1 zinc-finger motif lies at 147 to 198; sequence CSICQELLLEKKLPVTFCRFGCGNSIHIKCMKILANYQSTSNTSMLKCPLCR. A ZZ-type zinc finger spans residues 229-280; that stretch reads HLGIPCNNCKQFPIEGKCYKCTECIEYHLCQECFDSCCHLSHTFTFREKRNQ. Residues C234, C237, C249, C252, C258, C261, H267, and H270 each contribute to the Zn(2+) site. The RING-type 2 zinc finger occupies 344–388; that stretch reads CLLCLKAFHLGQHTRLLPCTHKFHRKCIDNWLFHKCNSCPIDGQV.

In terms of assembly, dimer. Interacts with UBE2D1. In terms of processing, polyubiquitinated. Polyubiquitination is followed by degradation via the proteasome. As to expression, expression is testis-specific.

It carries out the reaction S-ubiquitinyl-[E2 ubiquitin-conjugating enzyme]-L-cysteine + [acceptor protein]-L-lysine = [E2 ubiquitin-conjugating enzyme]-L-cysteine + N(6)-ubiquitinyl-[acceptor protein]-L-lysine.. Its function is as follows. E3 ubiquitin-protein ligase involved in the regulation of Fas-, DR3- and DR4-mediated apoptosis. Functions in conjunction with the UBE2D1, UBE2D3 and UBE2E1 E2 ubiquitin-conjugating enzymes. In Homo sapiens (Human), this protein is E3 ubiquitin-protein ligase ZSWIM2.